A 329-amino-acid chain; its full sequence is Glyceraldehyde-3-phosphate dehydrogenase 1 (329 aa).

NAD(+) contacts are provided by residues 11-12 (RI), aspartate 33, and lysine 78. D-glyceraldehyde 3-phosphate-binding positions include 148-150 (SCT), threonine 179, 208-209 (TG), and arginine 231. Catalysis depends on cysteine 149, which acts as the Nucleophile. Asparagine 313 contacts NAD(+).

It belongs to the glyceraldehyde-3-phosphate dehydrogenase family. In terms of assembly, homotetramer.

Its subcellular location is the cytoplasm. The enzyme catalyses D-glyceraldehyde 3-phosphate + phosphate + NAD(+) = (2R)-3-phospho-glyceroyl phosphate + NADH + H(+). It functions in the pathway carbohydrate degradation; glycolysis; pyruvate from D-glyceraldehyde 3-phosphate: step 1/5. This Kluyveromyces lactis (strain ATCC 8585 / CBS 2359 / DSM 70799 / NBRC 1267 / NRRL Y-1140 / WM37) (Yeast) protein is Glyceraldehyde-3-phosphate dehydrogenase 1 (GAP1).